An 856-amino-acid chain; its full sequence is Alanine/arginine aminopeptidase (856 aa).

Residues E132 and 264–268 (GAMEN) each bind substrate. H300 is a binding site for Zn(2+). The active-site Proton acceptor is the E301. The Zn(2+) site is built by H304 and E323.

Belongs to the peptidase M1 family. It depends on Zn(2+) as a cofactor.

Functionally, positive effector of glycogen accumulation. May be involved in nutrient-sensing. This chain is Alanine/arginine aminopeptidase (AAP1), found in Saccharomyces cerevisiae (strain ATCC 204508 / S288c) (Baker's yeast).